The chain runs to 329 residues: Beta-ketoacyl-[acyl-carrier-protein] synthase III (329 aa).

Active-site residues include Cys-123 and His-256. The ACP-binding stretch occupies residues 257–261; that stretch reads QANIR. Asn-286 is a catalytic residue.

The protein belongs to the thiolase-like superfamily. FabH family. Homodimer.

The protein localises to the cytoplasm. The enzyme catalyses malonyl-[ACP] + acetyl-CoA + H(+) = 3-oxobutanoyl-[ACP] + CO2 + CoA. The protein operates within lipid metabolism; fatty acid biosynthesis. In terms of biological role, catalyzes the condensation reaction of fatty acid synthesis by the addition to an acyl acceptor of two carbons from malonyl-ACP. Catalyzes the first condensation reaction which initiates fatty acid synthesis and may therefore play a role in governing the total rate of fatty acid production. Possesses both acetoacetyl-ACP synthase and acetyl transacylase activities. Its substrate specificity determines the biosynthesis of branched-chain and/or straight-chain of fatty acids. In Burkholderia pseudomallei (strain 1710b), this protein is Beta-ketoacyl-[acyl-carrier-protein] synthase III.